The sequence spans 137 residues: Probable DNA-directed RNA polymerases I, II, and III subunit RPABC2 (137 aa).

2 stretches are compositionally biased toward acidic residues: residues 1–27 (MADEDDYQDMDNDDFVDDNEMEDVIEE) and 34–43 (NEDEDDDNVD). The disordered stretch occupies residues 1 to 43 (MADEDDYQDMDNDDFVDDNEMEDVIEEDPQRPDNEDEDDDNVD).

This sequence belongs to the archaeal Rpo6/eukaryotic RPB6 RNA polymerase subunit family. As to quaternary structure, component of the RNA polymerase I (Pol I), RNA polymerase II (Pol II) and RNA polymerase III (Pol III) complexes consisting of at least 13, 12 and 17 subunits, respectively.

Its subcellular location is the nucleus. DNA-dependent RNA polymerases catalyze the transcription of DNA into RNA using the four ribonucleoside triphosphates as substrates. Common component of RNA polymerases I, II and III which synthesize ribosomal RNA precursors, mRNA precursors and many functional non-coding RNAs, and small RNAs, such as 5S rRNA and tRNAs, respectively. Pol II is the central component of the basal RNA polymerase II transcription machinery. Pols are composed of mobile elements that move relative to each other. In Pol II, RPB6 is part of the clamp element and together with parts of RPB1 and RPB2 forms a pocket to which the RPB4-RPB7 subcomplex binds. This is Probable DNA-directed RNA polymerases I, II, and III subunit RPABC2 (rpb-6) from Caenorhabditis elegans.